The chain runs to 589 residues: Phenylalanine--tRNA ligase beta subunit (589 aa).

One can recognise a B5 domain in the interval 290-368 (LNPTCFKADI…IAYGYDNLKH (79 aa)). The Mg(2+) site is built by Asp-346, Asp-352, Glu-355, and Asp-356.

The protein belongs to the phenylalanyl-tRNA synthetase beta subunit family. Type 2 subfamily. In terms of assembly, tetramer of two alpha and two beta subunits. The cofactor is Mg(2+).

It is found in the cytoplasm. It localises to the nucleus. It catalyses the reaction tRNA(Phe) + L-phenylalanine + ATP = L-phenylalanyl-tRNA(Phe) + AMP + diphosphate + H(+). The sequence is that of Phenylalanine--tRNA ligase beta subunit (frs1) from Schizosaccharomyces pombe (strain 972 / ATCC 24843) (Fission yeast).